Here is a 194-residue protein sequence, read N- to C-terminus: Outer-membrane lipoprotein LolB (194 aa).

Positions 1 to 18 (MKLLQHLTLIFCLLILTA) are cleaved as a signal peptide. Cysteine 19 carries the N-palmitoyl cysteine lipid modification. Cysteine 19 is lipidated: S-diacylglycerol cysteine.

This sequence belongs to the LolB family. Monomer.

Its subcellular location is the cell outer membrane. Plays a critical role in the incorporation of lipoproteins in the outer membrane after they are released by the LolA protein. This is Outer-membrane lipoprotein LolB from Tolumonas auensis (strain DSM 9187 / NBRC 110442 / TA 4).